The following is a 483-amino-acid chain: Probable cytosol aminopeptidase (483 aa).

Residues lysine 252 and aspartate 257 each coordinate Mn(2+). Lysine 264 is a catalytic residue. 3 residues coordinate Mn(2+): aspartate 275, aspartate 334, and glutamate 336. Arginine 338 is a catalytic residue.

This sequence belongs to the peptidase M17 family. It depends on Mn(2+) as a cofactor.

The protein localises to the cytoplasm. The enzyme catalyses Release of an N-terminal amino acid, Xaa-|-Yaa-, in which Xaa is preferably Leu, but may be other amino acids including Pro although not Arg or Lys, and Yaa may be Pro. Amino acid amides and methyl esters are also readily hydrolyzed, but rates on arylamides are exceedingly low.. It catalyses the reaction Release of an N-terminal amino acid, preferentially leucine, but not glutamic or aspartic acids.. Functionally, presumably involved in the processing and regular turnover of intracellular proteins. Catalyzes the removal of unsubstituted N-terminal amino acids from various peptides. This Legionella pneumophila (strain Paris) protein is Probable cytosol aminopeptidase.